A 595-amino-acid polypeptide reads, in one-letter code: Fructan 1-exohydrolase (595 aa).

The first 20 residues, 1–20 (MAQAWAFLLPLLVLGSYVTS), serve as a signal peptide directing secretion. D74 is a catalytic residue. N-linked (GlcNAc...) asparagine glycans are attached at residues N167, N235, and N247. Cysteines 445 and 491 form a disulfide. N566 carries N-linked (GlcNAc...) asparagine glycosylation.

It belongs to the glycosyl hydrolase 32 family.

It catalyses the reaction Hydrolysis of terminal, non-reducing (2-&gt;1)-linked beta-D-fructofuranose residues in fructans.. Its activity is regulated as follows. Inhibited by sucrose. In terms of biological role, hydrolyzes inulin-type beta-(2,1)-fructans. May play a role as a beta-(2,1)-trimmer during graminan biosynthesis. The sequence is that of Fructan 1-exohydrolase from Aegilops speltoides (Goatgrass).